We begin with the raw amino-acid sequence, 341 residues long: Anthranilate phosphoribosyltransferase (341 aa).

5-phospho-alpha-D-ribose 1-diphosphate is bound by residues Gly81, 84–85 (GD), Ser89, 91–94 (NIST), 109–117 (KHGNRSASS), and Ser121. An anthranilate-binding site is contributed by Gly81. Ser93 provides a ligand contact to Mg(2+). Anthranilate is bound at residue Asn112. Arg167 serves as a coordination point for anthranilate. Residues Asp225 and Glu226 each coordinate Mg(2+).

Belongs to the anthranilate phosphoribosyltransferase family. In terms of assembly, homodimer. Mg(2+) is required as a cofactor.

The enzyme catalyses N-(5-phospho-beta-D-ribosyl)anthranilate + diphosphate = 5-phospho-alpha-D-ribose 1-diphosphate + anthranilate. The protein operates within amino-acid biosynthesis; L-tryptophan biosynthesis; L-tryptophan from chorismate: step 2/5. Functionally, catalyzes the transfer of the phosphoribosyl group of 5-phosphorylribose-1-pyrophosphate (PRPP) to anthranilate to yield N-(5'-phosphoribosyl)-anthranilate (PRA). The chain is Anthranilate phosphoribosyltransferase from Nocardioides sp. (strain ATCC BAA-499 / JS614).